The primary structure comprises 153 residues: ATP synthase subunit b' (153 aa).

The helical transmembrane segment at 20–40 (TLPLMAVQVVLLTFILNALFF) threads the bilayer.

The protein belongs to the ATPase B chain family. F-type ATPases have 2 components, F(1) - the catalytic core - and F(0) - the membrane proton channel. F(1) has five subunits: alpha(3), beta(3), gamma(1), delta(1), epsilon(1). F(0) has four main subunits: a(1), b(1), b'(1) and c(10-14). The alpha and beta chains form an alternating ring which encloses part of the gamma chain. F(1) is attached to F(0) by a central stalk formed by the gamma and epsilon chains, while a peripheral stalk is formed by the delta, b and b' chains.

The protein localises to the cellular thylakoid membrane. Its function is as follows. F(1)F(0) ATP synthase produces ATP from ADP in the presence of a proton or sodium gradient. F-type ATPases consist of two structural domains, F(1) containing the extramembraneous catalytic core and F(0) containing the membrane proton channel, linked together by a central stalk and a peripheral stalk. During catalysis, ATP synthesis in the catalytic domain of F(1) is coupled via a rotary mechanism of the central stalk subunits to proton translocation. In terms of biological role, component of the F(0) channel, it forms part of the peripheral stalk, linking F(1) to F(0). The b'-subunit is a diverged and duplicated form of b found in plants and photosynthetic bacteria. The protein is ATP synthase subunit b' of Prochlorococcus marinus (strain NATL1A).